A 454-amino-acid polypeptide reads, in one-letter code: Signal recognition particle protein (454 aa).

GTP is bound by residues 102–109 (GLQGTGKT), 184–188 (DTAGR), and 242–245 (TKMD).

Belongs to the GTP-binding SRP family. SRP54 subfamily. As to quaternary structure, part of the signal recognition particle protein translocation system, which is composed of SRP and FtsY.

Its subcellular location is the cytoplasm. The catalysed reaction is GTP + H2O = GDP + phosphate + H(+). Functionally, involved in targeting and insertion of nascent membrane proteins into the cytoplasmic membrane. Binds to the hydrophobic signal sequence of the ribosome-nascent chain (RNC) as it emerges from the ribosomes. The SRP-RNC complex is then targeted to the cytoplasmic membrane where it interacts with the SRP receptor FtsY. This is Signal recognition particle protein from Aquifex aeolicus (strain VF5).